Consider the following 532-residue polypeptide: Tyrosine-protein kinase Src-1 (532 aa).

Residues 1–52 (MGATKSKPREGGPRSRSLDIVEGSHQPFTSLSASQTPNKSLDSHRPPAQPFG) form a disordered region. Glycine 2 is lipidated: N-myristoyl glycine. The segment covering 7-19 (KPREGGPRSRSLD) has biased composition (basic and acidic residues). Residues 26–40 (QPFTSLSASQTPNKS) are compositionally biased toward polar residues. In terms of domain architecture, SH3 spans 80–141 (GGVTTFVALY…PSNYVAPSDS (62 aa)). Positions 147–244 (WYLGKITRRE…GLCHRLTTVC (98 aa)) constitute an SH2 domain. Residues 266-519 (LRLELKLGQG…YLQAFLEDYF (254 aa)) form the Protein kinase domain. Residues 272 to 280 (LGQGCFGEV) and lysine 294 each bind ATP. Catalysis depends on aspartate 385, which acts as the Proton acceptor. Tyrosine 415 carries the phosphotyrosine; by autocatalysis modification.

This sequence belongs to the protein kinase superfamily. Tyr protein kinase family. SRC subfamily.

Its subcellular location is the cell membrane. It catalyses the reaction L-tyrosyl-[protein] + ATP = O-phospho-L-tyrosyl-[protein] + ADP + H(+). The protein is Tyrosine-protein kinase Src-1 (src-a) of Xenopus laevis (African clawed frog).